The primary structure comprises 388 residues: Formate-dependent phosphoribosylglycinamide formyltransferase (388 aa).

N(1)-(5-phospho-beta-D-ribosyl)glycinamide contacts are provided by residues 21-22 (EL) and Glu-81. Residues Arg-113, Lys-154, 159-164 (SSGHGQ), 193-196 (EEFI), and Glu-201 each bind ATP. One can recognise an ATP-grasp domain in the interval 118-306 (KFAAEELGLK…EFALHVRAVL (189 aa)). The Mg(2+) site is built by Glu-265 and Glu-277. N(1)-(5-phospho-beta-D-ribosyl)glycinamide is bound by residues Asp-284, Lys-352, and 359–360 (RR).

The protein belongs to the PurK/PurT family. As to quaternary structure, homodimer.

The catalysed reaction is N(1)-(5-phospho-beta-D-ribosyl)glycinamide + formate + ATP = N(2)-formyl-N(1)-(5-phospho-beta-D-ribosyl)glycinamide + ADP + phosphate + H(+). The protein operates within purine metabolism; IMP biosynthesis via de novo pathway; N(2)-formyl-N(1)-(5-phospho-D-ribosyl)glycinamide from N(1)-(5-phospho-D-ribosyl)glycinamide (formate route): step 1/1. Functionally, involved in the de novo purine biosynthesis. Catalyzes the transfer of formate to 5-phospho-ribosyl-glycinamide (GAR), producing 5-phospho-ribosyl-N-formylglycinamide (FGAR). Formate is provided by PurU via hydrolysis of 10-formyl-tetrahydrofolate. This Nitratiruptor sp. (strain SB155-2) protein is Formate-dependent phosphoribosylglycinamide formyltransferase.